An 838-amino-acid polypeptide reads, in one-letter code: Protein P (838 aa).

Residues 1–177 (MPLSYQHFRK…FCGSPYSWEQ (177 aa)) are terminal protein domain (TP). The spacer stretch occupies residues 178-341 (ELQHQTSTRH…YCLTHIVNLL (164 aa)). Disordered stretches follow at residues 215 to 238 (QSRLGLQPQQGSMARGKSGRSGSI) and 285 to 311 (STSKRQSSSGHAVEFHNIPPSSARSQS). A compositionally biased stretch (polar residues) spans 285–294 (STSKRQSSSG). Positions 342 to 685 (EDWGPCTEHG…YLHLYPVARQ (344 aa)) are polymerase/reverse transcriptase domain (RT). The 244-residue stretch at 352 to 595 (EHNIRIPRTP…YSLNFMGYVI (244 aa)) folds into the Reverse transcriptase domain. Mg(2+)-binding residues include Asp-424, Asp-546, and Asp-547.

Belongs to the hepadnaviridae P protein family.

It catalyses the reaction DNA(n) + a 2'-deoxyribonucleoside 5'-triphosphate = DNA(n+1) + diphosphate. The enzyme catalyses Endonucleolytic cleavage to 5'-phosphomonoester.. With respect to regulation, activated by host HSP70 and HSP40 in vitro to be able to bind the epsilon loop of the pgRNA. Because deletion of the RNase H region renders the protein partly chaperone-independent, the chaperones may be needed indirectly to relieve occlusion of the RNA-binding site by this domain. Inhibited by several reverse-transcriptase inhibitors: Lamivudine, Adefovir and Entecavir. Multifunctional enzyme that converts the viral RNA genome into dsDNA in viral cytoplasmic capsids. This enzyme displays a DNA polymerase activity that can copy either DNA or RNA templates, and a ribonuclease H (RNase H) activity that cleaves the RNA strand of RNA-DNA heteroduplexes in a partially processive 3'- to 5'-endonucleasic mode. Neo-synthesized pregenomic RNA (pgRNA) are encapsidated together with the P protein, and reverse-transcribed inside the nucleocapsid. Initiation of reverse-transcription occurs first by binding the epsilon loop on the pgRNA genome, and is initiated by protein priming, thereby the 5'-end of (-)DNA is covalently linked to P protein. Partial (+)DNA is synthesized from the (-)DNA template and generates the relaxed circular DNA (RC-DNA) genome. After budding and infection, the RC-DNA migrates in the nucleus, and is converted into a plasmid-like covalently closed circular DNA (cccDNA). The activity of P protein does not seem to be necessary for cccDNA generation, and is presumably released from (+)DNA by host nuclear DNA repair machinery. The sequence is that of Protein P from Homo sapiens (Human).